A 232-amino-acid polypeptide reads, in one-letter code: Phosphoribosylformylglycinamidine synthase subunit PurQ (232 aa).

The region spanning 3 to 232 is the Glutamine amidotransferase type-1 domain; the sequence is FAVIVFPGSN…SLVASALAVV (230 aa). Catalysis depends on C86, which acts as the Nucleophile. Catalysis depends on residues H203 and E205.

Part of the FGAM synthase complex composed of 1 PurL, 1 PurQ and 2 PurS subunits.

The protein localises to the cytoplasm. It carries out the reaction N(2)-formyl-N(1)-(5-phospho-beta-D-ribosyl)glycinamide + L-glutamine + ATP + H2O = 2-formamido-N(1)-(5-O-phospho-beta-D-ribosyl)acetamidine + L-glutamate + ADP + phosphate + H(+). It catalyses the reaction L-glutamine + H2O = L-glutamate + NH4(+). It participates in purine metabolism; IMP biosynthesis via de novo pathway; 5-amino-1-(5-phospho-D-ribosyl)imidazole from N(2)-formyl-N(1)-(5-phospho-D-ribosyl)glycinamide: step 1/2. Its function is as follows. Part of the phosphoribosylformylglycinamidine synthase complex involved in the purines biosynthetic pathway. Catalyzes the ATP-dependent conversion of formylglycinamide ribonucleotide (FGAR) and glutamine to yield formylglycinamidine ribonucleotide (FGAM) and glutamate. The FGAM synthase complex is composed of three subunits. PurQ produces an ammonia molecule by converting glutamine to glutamate. PurL transfers the ammonia molecule to FGAR to form FGAM in an ATP-dependent manner. PurS interacts with PurQ and PurL and is thought to assist in the transfer of the ammonia molecule from PurQ to PurL. The polypeptide is Phosphoribosylformylglycinamidine synthase subunit PurQ (Gloeobacter violaceus (strain ATCC 29082 / PCC 7421)).